The chain runs to 366 residues: UDP-N-acetylglucosamine--N-acetylmuramyl-(pentapeptide) pyrophosphoryl-undecaprenol N-acetylglucosamine transferase (366 aa).

UDP-N-acetyl-alpha-D-glucosamine-binding positions include 14 to 16 (TGG), Asn-125, Arg-168, Ser-196, and Gln-297.

The protein belongs to the glycosyltransferase 28 family. MurG subfamily.

The protein localises to the cell inner membrane. The enzyme catalyses di-trans,octa-cis-undecaprenyl diphospho-N-acetyl-alpha-D-muramoyl-L-alanyl-D-glutamyl-meso-2,6-diaminopimeloyl-D-alanyl-D-alanine + UDP-N-acetyl-alpha-D-glucosamine = di-trans,octa-cis-undecaprenyl diphospho-[N-acetyl-alpha-D-glucosaminyl-(1-&gt;4)]-N-acetyl-alpha-D-muramoyl-L-alanyl-D-glutamyl-meso-2,6-diaminopimeloyl-D-alanyl-D-alanine + UDP + H(+). Its pathway is cell wall biogenesis; peptidoglycan biosynthesis. Functionally, cell wall formation. Catalyzes the transfer of a GlcNAc subunit on undecaprenyl-pyrophosphoryl-MurNAc-pentapeptide (lipid intermediate I) to form undecaprenyl-pyrophosphoryl-MurNAc-(pentapeptide)GlcNAc (lipid intermediate II). The chain is UDP-N-acetylglucosamine--N-acetylmuramyl-(pentapeptide) pyrophosphoryl-undecaprenol N-acetylglucosamine transferase from Bradyrhizobium diazoefficiens (strain JCM 10833 / BCRC 13528 / IAM 13628 / NBRC 14792 / USDA 110).